The following is a 118-amino-acid chain: Hydrogenase maturation factor HypA (118 aa).

Position 2 (His2) interacts with Ni(2+). Positions 73, 76, 93, and 96 each coordinate Zn(2+).

This sequence belongs to the HypA/HybF family.

Functionally, involved in the maturation of [NiFe] hydrogenases. Required for nickel insertion into the metal center of the hydrogenase. In Lawsonia intracellularis (strain PHE/MN1-00), this protein is Hydrogenase maturation factor HypA.